A 164-amino-acid polypeptide reads, in one-letter code: Peptidyl-prolyl cis-trans isomerase A (164 aa).

At methionine 1 the chain carries N-acetylmethionine. Valine 2 is subject to N-acetylvaline; in Peptidyl-prolyl cis-trans isomerase A, N-terminally processed. The PPIase cyclophilin-type domain occupies 7-163 (FFDISADGEP…KKITISDCGQ (157 aa)). Lysine 28 is subject to N6-acetyllysine; alternate. A Glycyl lysine isopeptide (Lys-Gly) (interchain with G-Cter in SUMO2); alternate cross-link involves residue lysine 28. A Glycyl lysine isopeptide (Lys-Gly) (interchain with G-Cter in ubiquitin); alternate cross-link involves residue lysine 28. At lysine 44 the chain carries N6-acetyllysine. Serine 77 bears the Phosphoserine mark. Lysine 82 is subject to N6-acetyllysine; alternate. Residue lysine 82 forms a Glycyl lysine isopeptide (Lys-Gly) (interchain with G-Cter in SUMO2); alternate linkage. Phosphothreonine is present on threonine 93. Asparagine 108 carries an N-linked (GlcNAc...) asparagine glycan. 3 positions are modified to N6-acetyllysine: lysine 125, lysine 131, and lysine 133.

Belongs to the cyclophilin-type PPIase family. PPIase A subfamily. As to quaternary structure, interacts with protein phosphatase PPP3CA/calcineurin A. Interacts with PRPF19 isoform 2 (via N-terminus). Interacts with isoform 2 of BSG/CD147. Interacts with FOXO1; the interaction promotes FOXO1 dephosphorylation, nuclear accumulation and transcriptional activity. Interacts with integrin ITGA2B:ITGB3; the interaction is ROS and peptidyl-prolyl cis-trans isomerase (PPIase) activity-dependent and is increased in the presence of thrombin. Interacts with MAP3K5. Interacts with TARDBP; the interaction is dependent on the RNA-binding activity of TARDBP and the PPIase activity of PPIA/CYPA and the acetylation of PPIA/CYPA at Lys-125 favors the interaction. Interacts with HNRNPA1, HNRNPA2B1, HNRNPC, RBMX, HNRNPK and HNRNPM. Post-translationally, acetylation at Lys-125 markedly inhibits catalysis of cis to trans isomerization. PPIA acetylation also antagonizes the immunosuppressive effects of cyclosporine by inhibiting the sequential steps of cyclosporine binding and calcineurin inhibition. Acetylation at Lys-125 favors the interaction with TARDBP.

The protein localises to the cytoplasm. It localises to the secreted. Its subcellular location is the nucleus. It catalyses the reaction [protein]-peptidylproline (omega=180) = [protein]-peptidylproline (omega=0). Its activity is regulated as follows. Binds cyclosporin A (CsA). CsA mediates some of its effects via an inhibitory action on PPIase. Catalyzes the cis-trans isomerization of proline imidic peptide bonds in oligopeptides. Exerts a strong chemotactic effect on leukocytes partly through activation of one of its membrane receptors BSG/CD147, initiating a signaling cascade that culminates in MAPK/ERK activation. Activates endothelial cells (ECs) in a proinflammatory manner by stimulating activation of NF-kappa-B and ERK, JNK and p38 MAP-kinases and by inducing expression of adhesion molecules including SELE and VCAM1. Induces apoptosis in ECs by promoting the FOXO1-dependent expression of CCL2 and BCL2L11 which are involved in EC chemotaxis and apoptosis. In response to oxidative stress, initiates proapoptotic and antiapoptotic signaling in ECs via activation of NF-kappa-B and AKT1 and up-regulation of antiapoptotic protein BCL2. Negatively regulates MAP3K5/ASK1 kinase activity, autophosphorylation and oxidative stress-induced apoptosis mediated by MAP3K5/ASK1. Necessary for the assembly of TARDBP in heterogeneous nuclear ribonucleoprotein (hnRNP) complexes and regulates TARDBP binding to RNA UG repeats and TARDBP-dependent expression of HDAC6, ATG7 and VCP which are involved in clearance of protein aggregates. Plays an important role in platelet activation and aggregation. Regulates calcium mobilization and integrin ITGA2B:ITGB3 bidirectional signaling via increased ROS production as well as by facilitating the interaction between integrin and the cell cytoskeleton. Binds heparan sulfate glycosaminoglycans. The protein is Peptidyl-prolyl cis-trans isomerase A (PPIA) of Cricetulus griseus (Chinese hamster).